We begin with the raw amino-acid sequence, 322 residues long: Phthalate dioxygenase reductase (322 aa).

One can recognise an FAD-binding FR-type domain in the interval 7 to 109; it reads DGFLRLKIAS…SLPRNEFPLD (103 aa). FMN-binding positions include 56 to 57, 73 to 75, 81 to 84, threonine 125, and phenylalanine 226; these read RT, AVK, and RGGS. Residues 239-322 enclose the 2Fe-2S ferredoxin-type domain; that stretch reads FTVRLSRSGT…AKSAELVLDL (84 aa). Cysteine 273 serves as a coordination point for [2Fe-2S] cluster. An FMN-binding site is contributed by serine 275. 3 residues coordinate [2Fe-2S] cluster: cysteine 278, cysteine 281, and cysteine 309.

Belongs to the PDR/VanB family. Monomer. Requires FMN as cofactor.

Component of the electron transfer chain involved in pyridine nucleotide-dependent dihydroxylation of phthalate. Utilizes FMN to mediate electron transfer from the two-electron donor, NADH, to the one-electron acceptor, (2Fe-2S). This chain is Phthalate dioxygenase reductase (ophA1), found in Burkholderia cepacia (Pseudomonas cepacia).